The sequence spans 122 residues: Large ribosomal subunit protein uL14c (122 aa).

This sequence belongs to the universal ribosomal protein uL14 family. Part of the 50S ribosomal subunit.

The protein localises to the plastid. Binds to 23S rRNA. This Cuscuta obtusiflora (Peruvian dodder) protein is Large ribosomal subunit protein uL14c.